The following is a 394-amino-acid chain: Succinate--CoA ligase [ADP-forming] subunit beta 1 (394 aa).

An ATP-grasp domain is found at 9-237 (RDLFAKHDVP…KAAANPLEAA (229 aa)). ATP is bound by residues Lys45, 52–54 (GRG), Glu92, Pro95, and Glu100. Asn192 and Asp206 together coordinate Mg(2+). Substrate contacts are provided by residues Asn257 and 319–321 (GIT).

The protein belongs to the succinate/malate CoA ligase beta subunit family. As to quaternary structure, heterotetramer of two alpha and two beta subunits. The cofactor is Mg(2+).

The enzyme catalyses succinate + ATP + CoA = succinyl-CoA + ADP + phosphate. It carries out the reaction GTP + succinate + CoA = succinyl-CoA + GDP + phosphate. The protein operates within carbohydrate metabolism; tricarboxylic acid cycle; succinate from succinyl-CoA (ligase route): step 1/1. Its function is as follows. Succinyl-CoA synthetase functions in the citric acid cycle (TCA), coupling the hydrolysis of succinyl-CoA to the synthesis of either ATP or GTP and thus represents the only step of substrate-level phosphorylation in the TCA. The beta subunit provides nucleotide specificity of the enzyme and binds the substrate succinate, while the binding sites for coenzyme A and phosphate are found in the alpha subunit. The chain is Succinate--CoA ligase [ADP-forming] subunit beta 1 from Streptomyces coelicolor (strain ATCC BAA-471 / A3(2) / M145).